A 255-amino-acid polypeptide reads, in one-letter code: Type III pantothenate kinase (255 aa).

An ATP-binding site is contributed by 6-13; that stretch reads DIGNSNID. Residue 107–110 participates in substrate binding; that stretch reads GADL. The Proton acceptor role is filled by Asp109. Asp129 serves as a coordination point for K(+). Thr132 serves as a coordination point for ATP. Substrate is bound at residue Thr183.

It belongs to the type III pantothenate kinase family. Homodimer. The cofactor is NH4(+). K(+) serves as cofactor.

It localises to the cytoplasm. The enzyme catalyses (R)-pantothenate + ATP = (R)-4'-phosphopantothenate + ADP + H(+). It participates in cofactor biosynthesis; coenzyme A biosynthesis; CoA from (R)-pantothenate: step 1/5. Its function is as follows. Catalyzes the phosphorylation of pantothenate (Pan), the first step in CoA biosynthesis. The sequence is that of Type III pantothenate kinase from Dictyoglomus turgidum (strain DSM 6724 / Z-1310).